Consider the following 146-residue polypeptide: Large ribosomal subunit protein uL15 (146 aa).

Residues 1–18 (MKLHELKPSEGSRKERNR) are compositionally biased toward basic and acidic residues. Residues 1–57 (MKLHELKPSEGSRKERNRVGRGIGSGNGKTSGKGHKGQNARSGGGVRPGFEGGQMPL) form a disordered region. Gly residues-rich tracts occupy residues 21-31 (RGIGSGNGKTS) and 42-52 (SGGGVRPGFEG).

It belongs to the universal ribosomal protein uL15 family. Part of the 50S ribosomal subunit.

Binds to the 23S rRNA. The sequence is that of Large ribosomal subunit protein uL15 from Bacillus pumilus (strain SAFR-032).